We begin with the raw amino-acid sequence, 479 residues long: MTDGDTSPAHTRPDAFGRVRHLHFVGIGGAGMGGIAEVLHNLGFTVTGSDLRENAITRRLAGLGVQVVFGHEADHVQGADAVVVSSAVQADNPEVQAAREYRIPVVRRAEMLAELMRFRYGIAVAGTHGKTTTTSLVASVLAEGGLDPTYVIGGRLNSSASHARLGSGRYLVAEADESDASFLHLKPMMAVVTNIDADHLETYGGDFDQLRHTFDEFLHHLPFYGLAVLCHDDPVLRDLGPEIARQVRSYGFAEDADLRAVDIEQSGRRTRFTVVDGEATFPVEVNLPGRHNVQNALAAIAVARELHVDVAAIQRALQRFQGIGRRFQDHGTLRFGDARVTLVDDYGHHPREIAATLRAVRDGWPGRRVLVVFQPHRYSRTRDLFEDFARVLSEADALLVTEVYAAGEPPVAGATGRGLCAAIRARGQVNPVFVETLEELQQVLPGVARDGDLVLTLGAGSIGGAAAELARRHGVEDGG.

Residue 126 to 132 participates in ATP binding; the sequence is GTHGKTT.

Belongs to the MurCDEF family.

The protein localises to the cytoplasm. The catalysed reaction is UDP-N-acetyl-alpha-D-muramate + L-alanine + ATP = UDP-N-acetyl-alpha-D-muramoyl-L-alanine + ADP + phosphate + H(+). It participates in cell wall biogenesis; peptidoglycan biosynthesis. Its function is as follows. Cell wall formation. This Alkalilimnicola ehrlichii (strain ATCC BAA-1101 / DSM 17681 / MLHE-1) protein is UDP-N-acetylmuramate--L-alanine ligase.